Here is an 89-residue protein sequence, read N- to C-terminus: Small ribosomal subunit protein uS15 (89 aa).

It belongs to the universal ribosomal protein uS15 family. In terms of assembly, part of the 30S ribosomal subunit. Forms a bridge to the 50S subunit in the 70S ribosome, contacting the 23S rRNA.

One of the primary rRNA binding proteins, it binds directly to 16S rRNA where it helps nucleate assembly of the platform of the 30S subunit by binding and bridging several RNA helices of the 16S rRNA. Functionally, forms an intersubunit bridge (bridge B4) with the 23S rRNA of the 50S subunit in the ribosome. The sequence is that of Small ribosomal subunit protein uS15 from Gloeothece citriformis (strain PCC 7424) (Cyanothece sp. (strain PCC 7424)).